A 363-amino-acid polypeptide reads, in one-letter code: Isopentenyl-diphosphate delta-isomerase (363 aa).

Residue 15-16 coordinates substrate; that stretch reads RK. Residues Ser-73, 74–76, Ser-104, and Asn-133 each bind FMN; that span reads SMT. A substrate-binding site is contributed by 104–106; that stretch reads SMR. Gln-168 lines the substrate pocket. Glu-169 is a binding site for Mg(2+). FMN contacts are provided by residues Lys-200, Thr-230, and 313 to 314; that span reads AG.

The protein belongs to the IPP isomerase type 2 family. Homooctamer. Dimer of tetramers. FMN is required as a cofactor. Requires NADPH as cofactor. The cofactor is Mg(2+).

The protein resides in the cytoplasm. It carries out the reaction isopentenyl diphosphate = dimethylallyl diphosphate. Involved in the biosynthesis of isoprenoids. Catalyzes the 1,3-allylic rearrangement of the homoallylic substrate isopentenyl (IPP) to its allylic isomer, dimethylallyl diphosphate (DMAPP). The protein is Isopentenyl-diphosphate delta-isomerase of Chlorobium phaeobacteroides (strain DSM 266 / SMG 266 / 2430).